The sequence spans 444 residues: 23S rRNA (uracil(1939)-C(5))-methyltransferase RlmD (444 aa).

In terms of domain architecture, TRAM spans 5–67 (RSRIDRTPFQ…RHFDEARTVE (63 aa)). Cys80, Cys86, Cys89, and Cys168 together coordinate [4Fe-4S] cluster. S-adenosyl-L-methionine contacts are provided by Gln276, Phe305, Asn310, Glu326, Asp353, and Asp374. The active-site Nucleophile is Cys400.

The protein belongs to the class I-like SAM-binding methyltransferase superfamily. RNA M5U methyltransferase family. RlmD subfamily.

It catalyses the reaction uridine(1939) in 23S rRNA + S-adenosyl-L-methionine = 5-methyluridine(1939) in 23S rRNA + S-adenosyl-L-homocysteine + H(+). Its function is as follows. Catalyzes the formation of 5-methyl-uridine at position 1939 (m5U1939) in 23S rRNA. The sequence is that of 23S rRNA (uracil(1939)-C(5))-methyltransferase RlmD from Stenotrophomonas maltophilia (strain R551-3).